A 334-amino-acid polypeptide reads, in one-letter code: MLALGKLLELTLAGREPAQKIQLTVDGVQMRWLSEGALEVRPPEARDNGSDLLLSSGIHGNETAPIELLDRLLHGIARGEIKPRSRVLFLFGNTEAMRRGERYLELDVNRLFNGRHEKNIGPEAMRAAELEQLARSFFSLPGRSRLHYDLHTAIRGSKIEQFALYPWKEGRQHSRHQLARLNAAGMQAVLLQNKTSITFTAFTYEQLEAEAFTLELGKARPFGQNQGVNVSRLELRLKQIIEGTEPETDSLDGLKLFAVSREVIKHSDAFLLHLPADVENFSELEKGYLLAEDVAKTRWVIEEEGARIIFPNPKVKNGLRAGILIVPTTDAVLG.

Residues histidine 59, glutamate 62, and histidine 151 each coordinate Zn(2+). The active site involves glutamate 215.

Belongs to the AspA/AstE family. Succinylglutamate desuccinylase subfamily. Zn(2+) is required as a cofactor.

The enzyme catalyses N-succinyl-L-glutamate + H2O = L-glutamate + succinate. It functions in the pathway amino-acid degradation; L-arginine degradation via AST pathway; L-glutamate and succinate from L-arginine: step 5/5. Transforms N(2)-succinylglutamate into succinate and glutamate. This Pseudomonas fluorescens (strain SBW25) protein is Succinylglutamate desuccinylase.